Here is a 429-residue protein sequence, read N- to C-terminus: Adenylosuccinate synthetase (429 aa).

Residues 12-18 and 40-42 contribute to the GTP site; these read GDEGKGK and GHT. Asp13 serves as the catalytic Proton acceptor. Asp13 and Gly40 together coordinate Mg(2+). Residues 13–16, 38–41, Thr128, Arg142, Gln223, Thr238, and Arg302 each bind IMP; these read DEGK and NAGH. The active-site Proton donor is the His41. 298–304 contacts substrate; it reads TTTGRPR. GTP is bound by residues Arg304, 330-332, and 412-414; these read SID and SVG.

The protein belongs to the adenylosuccinate synthetase family. In terms of assembly, homodimer. Mg(2+) serves as cofactor.

Its subcellular location is the cytoplasm. The catalysed reaction is IMP + L-aspartate + GTP = N(6)-(1,2-dicarboxyethyl)-AMP + GDP + phosphate + 2 H(+). It functions in the pathway purine metabolism; AMP biosynthesis via de novo pathway; AMP from IMP: step 1/2. In terms of biological role, plays an important role in the de novo pathway of purine nucleotide biosynthesis. Catalyzes the first committed step in the biosynthesis of AMP from IMP. The chain is Adenylosuccinate synthetase from Bacillus cereus (strain ATCC 14579 / DSM 31 / CCUG 7414 / JCM 2152 / NBRC 15305 / NCIMB 9373 / NCTC 2599 / NRRL B-3711).